Here is a 157-residue protein sequence, read N- to C-terminus: Pyruvoyl-dependent arginine decarboxylase 1 (157 aa).

Ser41 carries the post-translational modification Pyruvic acid (Ser).

It belongs to the PdaD family. The cofactor is pyruvate.

The catalysed reaction is L-arginine + H(+) = agmatine + CO2. The chain is Pyruvoyl-dependent arginine decarboxylase 1 (pdaD1) from Archaeoglobus fulgidus (strain ATCC 49558 / DSM 4304 / JCM 9628 / NBRC 100126 / VC-16).